A 428-amino-acid chain; its full sequence is Putative F-box protein At3g22421 (428 aa).

The region spanning 4–50 (TTTISHLPTELLDEIISRVPLKSTRAVRLTCKNWDSLFKNRSFMKEE) is the F-box domain.

The polypeptide is Putative F-box protein At3g22421 (Arabidopsis thaliana (Mouse-ear cress)).